The primary structure comprises 47 residues: Large ribosomal subunit protein bL33C (47 aa).

Belongs to the bacterial ribosomal protein bL33 family.

The sequence is that of Large ribosomal subunit protein bL33C from Staphylococcus aureus (strain MRSA252).